The following is a 370-amino-acid chain: tRNA-specific 2-thiouridylase MnmA (370 aa).

ATP is bound by residues 11–18 (GMSGGVDS) and M37. The tract at residues 97 to 99 (NPD) is interaction with target base in tRNA. Catalysis depends on C102, which acts as the Nucleophile. The cysteines at positions 102 and 199 are disulfide-linked. G126 provides a ligand contact to ATP. The interval 149–151 (KDQ) is interaction with tRNA. The active-site Cysteine persulfide intermediate is C199. An interaction with tRNA region spans residues 307-308 (RY).

Belongs to the MnmA/TRMU family.

Its subcellular location is the cytoplasm. It carries out the reaction S-sulfanyl-L-cysteinyl-[protein] + uridine(34) in tRNA + AH2 + ATP = 2-thiouridine(34) in tRNA + L-cysteinyl-[protein] + A + AMP + diphosphate + H(+). In terms of biological role, catalyzes the 2-thiolation of uridine at the wobble position (U34) of tRNA, leading to the formation of s(2)U34. The sequence is that of tRNA-specific 2-thiouridylase MnmA from Staphylococcus haemolyticus (strain JCSC1435).